The sequence spans 443 residues: ATP-dependent protease ATPase subunit HslU (443 aa).

ATP is bound by residues I20, 62–67 (GVGKTE), D255, E321, and R393.

This sequence belongs to the ClpX chaperone family. HslU subfamily. In terms of assembly, a double ring-shaped homohexamer of HslV is capped on each side by a ring-shaped HslU homohexamer. The assembly of the HslU/HslV complex is dependent on binding of ATP.

The protein localises to the cytoplasm. In terms of biological role, ATPase subunit of a proteasome-like degradation complex; this subunit has chaperone activity. The binding of ATP and its subsequent hydrolysis by HslU are essential for unfolding of protein substrates subsequently hydrolyzed by HslV. HslU recognizes the N-terminal part of its protein substrates and unfolds these before they are guided to HslV for hydrolysis. This chain is ATP-dependent protease ATPase subunit HslU, found in Helicobacter pylori (strain J99 / ATCC 700824) (Campylobacter pylori J99).